The chain runs to 241 residues: Small ribosomal subunit protein uS3 (241 aa).

Residues 39–109 form the KH type-2 domain; that stretch reads VRNYVNKNLS…PIRINVVEVA (71 aa). The tract at residues 213–241 is disordered; that stretch reads ADEQPTNREPQQRRRQQQRRRQQFEDRSE.

It belongs to the universal ribosomal protein uS3 family. As to quaternary structure, part of the 30S ribosomal subunit. Forms a tight complex with proteins S10 and S14.

Binds the lower part of the 30S subunit head. Binds mRNA in the 70S ribosome, positioning it for translation. This Acaryochloris marina (strain MBIC 11017) protein is Small ribosomal subunit protein uS3.